Consider the following 446-residue polypeptide: MSSPTSSLDTPVPGNGSPQPSTSATSPTIKEEGQETDPPPGSEGSSSAYIVVILEPEDEPERKRKKGPAPKMLGHELCRVCGDKASGFHYNVLSCEGCKGFFRRSVVHGGAGRYACRGSGTCQMDAFMRRKCQLCRLRKCKEAGMREQCVLSEEQIRKKRIQKQQQQQPPPPSEPAASSSGRPAASPGTSEASSQGSGEGEGIQLTAAQELMIQQLVAAQLQCNKRSFSDQPKVTPWPLGADPQSRDARQQRFAHFTELAIISVQEIVDFAKQVPGFLQLGREDQIALLKASTIEIMLLETARRYNHETECITFLKDFTYSKDDFHRAGLQVEFINPIFEFSRAMRRLGLDDAEYALLIAINIFSADRPNVQEPSRVEALQQPYVEALLSYTRIKRPQDQLRFPRMLMKLVSLRTLSSVHSEQVFALRLQDKKLPPLLSEIWDVHE.

The disordered stretch occupies residues 1–69 (MSSPTSSLDT…PERKRKKGPA (69 aa)). Residues 1–76 (MSSPTSSLDT…GPAPKMLGHE (76 aa)) are transactivation AF-1; required for ligand-independent transactivation function. The span at 17–28 (SPQPSTSATSPT) shows a compositional bias: low complexity. Residues 75-152 (HELCRVCGDK…AGMREQCVLS (78 aa)) constitute a DNA-binding region (nuclear receptor). 2 consecutive NR C4-type zinc fingers follow at residues 78–98 (CRVCGDKASGFHYNVLSCEGC) and 116–140 (CRGSGTCQMDAFMRRKCQLCRLRKC). A disordered region spans residues 159–201 (KRIQKQQQQQPPPPSEPAASSSGRPAASPGTSEASSQGSGEGE). Over residues 175-196 (PAASSSGRPAASPGTSEASSQG) the composition is skewed to low complexity. Positions 205 to 446 (LTAAQELMIQ…LLSEIWDVHE (242 aa)) are transactivation AF-2; required for ligand-dependent transactivation function; mediates interaction with CCAR2. One can recognise an NR LBD domain in the interval 208–446 (AQELMIQQLV…LLSEIWDVHE (239 aa)). Residues Lys395 and Lys433 each participate in a glycyl lysine isopeptide (Lys-Gly) (interchain with G-Cter in SUMO2) cross-link.

It belongs to the nuclear hormone receptor family. NR1 subfamily. In terms of assembly, forms a heterodimer with RXR. Interacts with CCAR2 (via N-terminus) in a ligand-independent manner. Interacts (when sumoylated) with GPS2; interaction with GPS2 onto hepatic acute phase protein promoters prevents N-Cor corepressor complex dissociation. Interacts with ABCA12 and ABCA1; this interaction is required for ABCA1 localization to the cell surface and is necessary for its normal activity and stability. In terms of processing, sumoylated by SUMO2 at Lys-395 and Lys-433 during the hepatic acute phase response, leading to promote interaction with GPS2 and prevent N-Cor corepressor complex dissociation. As to expression, ubiquitous.

It is found in the nucleus. Functionally, nuclear receptor that exhibits a ligand-dependent transcriptional activation activity. Binds preferentially to double-stranded oligonucleotide direct repeats having the consensus half-site sequence 5'-AGGTCA-3' and 4-nt spacing (DR-4). Regulates cholesterol uptake through MYLIP-dependent ubiquitination of LDLR, VLDLR and LRP8; DLDLR and LRP8. Interplays functionally with RORA for the regulation of genes involved in liver metabolism. Induces LPCAT3-dependent phospholipid remodeling in endoplasmic reticulum (ER) membranes of hepatocytes, driving SREBF1 processing and lipogenesis. Via LPCAT3, triggers the incorporation of arachidonate into phosphatidylcholines of ER membranes, increasing membrane dynamics and enabling triacylglycerols transfer to nascent very low-density lipoprotein (VLDL) particles. Via LPCAT3 also counteracts lipid-induced ER stress response and inflammation, likely by modulating SRC kinase membrane compartmentalization and limiting the synthesis of lipid inflammatory mediators. Plays an anti-inflammatory role during the hepatic acute phase response by acting as a corepressor: inhibits the hepatic acute phase response by preventing dissociation of the N-Cor corepressor complex. The protein is Oxysterols receptor LXR-beta (Nr1h2) of Mus musculus (Mouse).